Consider the following 68-residue polypeptide: Large ribosomal subunit protein uL30 (68 aa).

This sequence belongs to the universal ribosomal protein uL30 family. Part of the 50S ribosomal subunit.

This Bartonella tribocorum (strain CIP 105476 / IBS 506) protein is Large ribosomal subunit protein uL30.